We begin with the raw amino-acid sequence, 416 residues long: Serine hydroxymethyltransferase 1 (416 aa).

(6S)-5,6,7,8-tetrahydrofolate is bound by residues L121 and 125 to 127; that span reads GHL. The residue at position 229 (K229) is an N6-(pyridoxal phosphate)lysine. Residues E245 and 354–356 each bind (6S)-5,6,7,8-tetrahydrofolate; that span reads SPF.

Belongs to the SHMT family. Homodimer. Pyridoxal 5'-phosphate serves as cofactor.

The protein localises to the cytoplasm. The catalysed reaction is (6R)-5,10-methylene-5,6,7,8-tetrahydrofolate + glycine + H2O = (6S)-5,6,7,8-tetrahydrofolate + L-serine. The protein operates within one-carbon metabolism; tetrahydrofolate interconversion. It functions in the pathway amino-acid biosynthesis; glycine biosynthesis; glycine from L-serine: step 1/1. Functionally, catalyzes the reversible interconversion of serine and glycine with tetrahydrofolate (THF) serving as the one-carbon carrier. This reaction serves as the major source of one-carbon groups required for the biosynthesis of purines, thymidylate, methionine, and other important biomolecules. Also exhibits THF-independent aldolase activity toward beta-hydroxyamino acids, producing glycine and aldehydes, via a retro-aldol mechanism. The sequence is that of Serine hydroxymethyltransferase 1 from Vibrio parahaemolyticus serotype O3:K6 (strain RIMD 2210633).